Consider the following 232-residue polypeptide: MTVQQRRRPPIASRETLQALLSEGAQALGVALSDAQRGALLDYVALLAKWNAVYNLTAIRDPRQMLIQHILDSLSIVPHLGAHGAAAAALDVGSGGGLPGVVLAIALPGWRVTLNDIVHKKSAFQNQAKAELKLGNLSVVTGRVETLRPGADVPAKFDVIVSRAFADLADFVTLARHLVAPGGSIWAMKGVRPDEEIGRLPDGARVKQMIRLTVPSLDAERHLIEVELDEAI.

S-adenosyl-L-methionine contacts are provided by residues Gly93, Leu98, 144 to 145, and Arg163; that span reads VE.

This sequence belongs to the methyltransferase superfamily. RNA methyltransferase RsmG family.

The protein resides in the cytoplasm. It carries out the reaction guanosine(527) in 16S rRNA + S-adenosyl-L-methionine = N(7)-methylguanosine(527) in 16S rRNA + S-adenosyl-L-homocysteine. Specifically methylates the N7 position of guanine in position 527 of 16S rRNA. The sequence is that of Ribosomal RNA small subunit methyltransferase G from Burkholderia pseudomallei (strain 1710b).